Consider the following 292-residue polypeptide: MYFQDVILTLQNYWARQGCVIEQPSGVECGAGTFNPHTFLRVIGPEPWNVAYVEPSRRPTDGRYGENPNRLQRYFQFQVIMKPSPDNVQDLYLQSLNALGINPAQHDIRFVEDDWESPTLGAWGLGWEVWLNGMEVSQFTYFQQVGGIDLAPVSVELTYGLERLAMYLQGVESVYDLAWNKDVTYGNIYHQNEVEQSRHNFEASDAQMLLRHFNDFEGQCKAMLELGLPWPAYDYCLKCSHTFNLLDARGAISITERTGYIGRVRALAAGVARLYAAQREELGYPMLKKDAR.

It belongs to the class-II aminoacyl-tRNA synthetase family. Tetramer of two alpha and two beta subunits.

The protein resides in the cytoplasm. The catalysed reaction is tRNA(Gly) + glycine + ATP = glycyl-tRNA(Gly) + AMP + diphosphate. This Desulfovibrio desulfuricans (strain ATCC 27774 / DSM 6949 / MB) protein is Glycine--tRNA ligase alpha subunit.